A 130-amino-acid polypeptide reads, in one-letter code: DUF35 domain-containing scaffold protein (130 aa).

Residues C20, C23, C34, and C37 each contribute to the Zn(2+) site.

This sequence belongs to the scaffold protein DUF35 family. As to quaternary structure, interacts with acetoacetyl-CoA thiolase and HMG-CoA synthase (HMGCS) that catalyzes the first and second step in the mevalonate pathway, respectively.

Functions as a scaffold to connect the acetoacetyl-CoA thiolase and HMG-CoA synthase (HMGCS) dimers in the channeling thiolase/HMGCS complex, which allows for efficient coupling of the endergonic thiolase reaction with the exergonic HMGCS reaction. The chain is DUF35 domain-containing scaffold protein from Methanothermococcus thermolithotrophicus (Methanococcus thermolithotrophicus).